A 1100-amino-acid polypeptide reads, in one-letter code: Isoleucine--tRNA ligase (1100 aa).

The 'HIGH' region signature appears at 48–58 (PFATGLPHFGH). Positions 626–630 (KMSKS) match the 'KMSKS' region motif. Lys629 is an ATP binding site.

It belongs to the class-I aminoacyl-tRNA synthetase family. IleS type 2 subfamily. Monomer. Requires Zn(2+) as cofactor.

It localises to the cytoplasm. The enzyme catalyses tRNA(Ile) + L-isoleucine + ATP = L-isoleucyl-tRNA(Ile) + AMP + diphosphate. Its function is as follows. Catalyzes the attachment of isoleucine to tRNA(Ile). As IleRS can inadvertently accommodate and process structurally similar amino acids such as valine, to avoid such errors it has two additional distinct tRNA(Ile)-dependent editing activities. One activity is designated as 'pretransfer' editing and involves the hydrolysis of activated Val-AMP. The other activity is designated 'posttransfer' editing and involves deacylation of mischarged Val-tRNA(Ile). The sequence is that of Isoleucine--tRNA ligase from Treponema denticola (strain ATCC 35405 / DSM 14222 / CIP 103919 / JCM 8153 / KCTC 15104).